We begin with the raw amino-acid sequence, 309 residues long: Probable pyridoxal 5'-phosphate synthase subunit PDX1 (309 aa).

Asp-40 is a binding site for D-ribose 5-phosphate. The active-site Schiff-base intermediate with D-ribose 5-phosphate is Lys-97. Gly-169 is a binding site for D-ribose 5-phosphate. Position 181 (Arg-181) interacts with D-glyceraldehyde 3-phosphate. Residues Gly-230 and Gly-251–Ser-252 contribute to the D-ribose 5-phosphate site.

It belongs to the PdxS/SNZ family.

The enzyme catalyses aldehydo-D-ribose 5-phosphate + D-glyceraldehyde 3-phosphate + L-glutamine = pyridoxal 5'-phosphate + L-glutamate + phosphate + 3 H2O + H(+). It functions in the pathway cofactor biosynthesis; pyridoxal 5'-phosphate biosynthesis. Functionally, catalyzes the formation of pyridoxal 5'-phosphate from ribose 5-phosphate (RBP), glyceraldehyde 3-phosphate (G3P) and ammonia. The ammonia is provided by PDX2. Can also use ribulose 5-phosphate and dihydroxyacetone phosphate as substrates, resulting from enzyme-catalyzed isomerization of RBP and G3P, respectively. Also plays an indirect role in resistance to singlet oxygen-generating photosensitizers. The sequence is that of Probable pyridoxal 5'-phosphate synthase subunit PDX1 (PDX1) from Ginkgo biloba (Ginkgo).